A 574-amino-acid chain; its full sequence is Frizzled-7 (574 aa).

A signal peptide spans 1-32 (MRDPGAAAPLSSLGLCALVLALLGALSAGAGA). The Extracellular segment spans residues 33 to 256 (QPYHGEKGIS…EEERRFARLW (224 aa)). The FZ domain maps to 44–163 (PDHGFCQPIS…HGAGEICVGQ (120 aa)). 5 disulfide bridges follow: Cys49–Cys110, Cys57–Cys103, Cys94–Cys131, Cys120–Cys160, and Cys124–Cys148. A glycan (N-linked (GlcNAc...) asparagine) is linked at Asn63. Asn164 carries N-linked (GlcNAc...) asparagine glycosylation. A helical transmembrane segment spans residues 257–277 (VGVWSVLCCASTLFTVLTYLV). The Cytoplasmic portion of the chain corresponds to 278 to 288 (DMRRFSYPERP). A helical membrane pass occupies residues 289-309 (IIFLSGCYFMVAVAHVAGFLL). Over 310 to 336 (EDRAVCVERFSDDGYRTVAQGTKKEGC) the chain is Extracellular. The chain crosses the membrane as a helical span at residues 337-357 (TILFMVLYFFGMASSIWWVIL). Over 358-379 (SLTWFLAAGMKWGHEAIEANSQ) the chain is Cytoplasmic. Residues 380–400 (YFHLAAWAVPAVKTITILAMG) traverse the membrane as a helical segment. Over 401–423 (QVDGDLLSGVCYVGLSSVDALRG) the chain is Extracellular. A helical transmembrane segment spans residues 424-444 (FVLAPLFVYLFIGTSFLLAGF). At 445-470 (VSLFRIRTIMKHDGTKTEKLEKLMVR) the chain is on the cytoplasmic side. The helical transmembrane segment at 471-491 (IGVFSVLYTVPATIVLACYFY) threads the bilayer. Over 492–528 (EQAFREHWERTWLLQTCKSYAVPCPPGHFPPMSPDFT) the chain is Extracellular. The chain crosses the membrane as a helical span at residues 529 to 549 (VFMIKYLMTMIVGITTGFWIW). Residues 550–574 (SGKTLQSWRRFYHRLSHSSKGETAV) are Cytoplasmic-facing. A Lys-Thr-X-X-X-Trp motif, mediates interaction with the PDZ domain of Dvl family members motif is present at residues 552-557 (KTLQSW). The short motif at 572-574 (TAV) is the PDZ-binding element.

This sequence belongs to the G-protein coupled receptor Fz/Smo family. Interacts with MAGI3. Interacts with DVL1. Interacts with CCDC88C/DAPLE; the interaction displaces DVL1 from FZD7, leading to inhibition of canonical Wnt signaling and triggering of non-canonical Wnt responses. Interacts with MYOC. Binds to SDCBP; this interaction is increased by inositol trisphosphate (IP3). Interacts with glypican GPC3. As to quaternary structure, (Microbial infection) Interacts with C.difficile toxin TcdB; frizzled receptors constitute the major host receptors for TcdB in the colonic epithelium. Ubiquitinated by ZNRF3, leading to its degradation by the proteasome. In terms of tissue distribution, high expression in adult skeletal muscle and fetal kidney, followed by fetal lung, adult heart, brain, and placenta. Specifically expressed in squamous cell esophageal carcinomas.

It is found in the cell membrane. The protein resides in the endosome membrane. In terms of biological role, receptor for Wnt proteins. Most frizzled receptors are coupled to the beta-catenin canonical signaling pathway, which leads to the activation of disheveled proteins, inhibition of GSK-3 kinase, nuclear accumulation of beta-catenin and activation of Wnt target genes. A second signaling pathway involving PKC and calcium fluxes has been seen for some family members, but it is not yet clear if it represents a distinct pathway or if it can be integrated in the canonical pathway, as PKC seems to be required for Wnt-mediated inactivation of GSK-3 kinase. Both pathways seem to involve interactions with G-proteins. Activation by WNT8 induces expression of beta-catenin target genes. Following ligand activation, binds to CCDC88C/DAPLE which displaces DVL1 from FZD7 and leads to inhibition of canonical Wnt signaling, activation of G-proteins by CCDC88C and triggering of non-canonical Wnt responses. May be involved in transduction and intercellular transmission of polarity information during tissue morphogenesis and/or in differentiated tissues. (Microbial infection) Acts as a receptor for C.difficile toxin TcdB in the colonic epithelium. The sequence is that of Frizzled-7 (FZD7) from Homo sapiens (Human).